We begin with the raw amino-acid sequence, 524 residues long: Coatomer subunit delta-1 (524 aa).

The disordered stretch occupies residues 215-244; it reads MDMDSFASKPKGGRPSAAATAPGKGLGMKL. The MHD domain maps to 283–524; sequence SDPVTVTIEE…RLVAANYQVV (242 aa).

It belongs to the adaptor complexes medium subunit family. Delta-COP subfamily. In terms of assembly, oligomeric complex that consists of at least the alpha, beta, beta', gamma, delta, epsilon and zeta subunits.

It is found in the cytoplasm. The protein resides in the golgi apparatus membrane. Its subcellular location is the cytoplasmic vesicle. It localises to the COPI-coated vesicle membrane. Its function is as follows. The coatomer is a cytosolic protein complex that binds to dilysine motifs and reversibly associates with Golgi non-clathrin-coated vesicles, which further mediate biosynthetic protein transport from the ER, via the Golgi up to the trans Golgi network. Coatomer complex is required for budding from Golgi membranes, and is essential for the retrograde Golgi-to-ER transport of dilysine-tagged proteins. The sequence is that of Coatomer subunit delta-1 from Oryza sativa subsp. japonica (Rice).